A 368-amino-acid polypeptide reads, in one-letter code: Glutamate 5-kinase (368 aa).

Lysine 13 serves as a coordination point for ATP. Substrate contacts are provided by serine 54, aspartate 141, and asparagine 153. 173 to 174 (SD) serves as a coordination point for ATP. The 78-residue stretch at 278-355 (KGSLRLDAGA…DEIPEILGYP (78 aa)) folds into the PUA domain.

The protein belongs to the glutamate 5-kinase family.

The protein resides in the cytoplasm. It catalyses the reaction L-glutamate + ATP = L-glutamyl 5-phosphate + ADP. Its pathway is amino-acid biosynthesis; L-proline biosynthesis; L-glutamate 5-semialdehyde from L-glutamate: step 1/2. In terms of biological role, catalyzes the transfer of a phosphate group to glutamate to form L-glutamate 5-phosphate. This Jannaschia sp. (strain CCS1) protein is Glutamate 5-kinase.